The primary structure comprises 318 residues: Phospholipid scramblase 1 (318 aa).

The segment covering 1–14 (MDKQNSQMNASHPE) has biased composition (polar residues). A disordered region spans residues 1 to 64 (MDKQNSQMNA…GPGPAGFPVP (64 aa)). Residues 1–84 (MDKQNSQMNA…NQPVGAAGVP (84 aa)) form a proline-rich domain (PRD) region. Topologically, residues 1 to 288 (MDKQNSQMNA…IQFPLDLDVK (288 aa)) are cytoplasmic. Residues 18-26 (PVGYPPQYP) carry the SH3-binding 1 motif. 2 consecutive short sequence motifs (PPXY motif) follow at residues 22-25 (PPQY) and 33-36 (PPGY). Over residues 31-44 (QGPPGYSGYPGPQV) the composition is skewed to low complexity. An SH3-binding 2 motif is present at residues 42 to 50 (PQVSYPPPP). Residues Tyr-69 and Tyr-74 each carry the phosphotyrosine; by ABL modification. Residues 84–92 (PWMPAPQPP) carry the SH3-binding 3 motif. An interaction with hepatitis C virus E2 glycoprotein region spans residues 99–290 (LEYLSQIDQI…FPLDLDVKMK (192 aa)). Thr-161 is modified (phosphothreonine; by PKC/PRKCD). Residues Cys-184, Cys-185, Cys-186, Cys-188, and Cys-189 are each lipidated (S-palmitoyl cysteine). The Nuclear localization signal motif lies at 257 to 266 (GKISKHWTGI). A helical membrane pass occupies residues 289 to 305 (MKAVMIGACFLIDFMFF). Residues 306 to 318 (ESTGSQEQKSGVW) are Extracellular-facing.

This sequence belongs to the phospholipid scramblase family. Forms homooligomers in the presence of calcium. Interacts with ABL. Interacts with RELT, RELL1 and RELL2. Interacts with OXSR1 in the presence of RELT. Interacts with TOP2A and TOP2B. Interacts with OCLN. Interacts with TRPC5. Interacts with TRPC1 and TRPC4. Interacts with ILDR1. In terms of assembly, (Microbial infection) Interacts with hepatitis C virus E1 and E2 glycoproteins. As to quaternary structure, (Microbial infection) Interacts with T-cell leukemia virus (HTLV)-1 protein Tax (via N-terminus); this interaction represses Tax homodimerization. (Microbial infection) Interacts with HIV-1 protein Tat; this interaction represses the Tat-dependent transactivation of the HIV-1 long terminal repeat (LTR) and reduces the nuclear translocation of Tat. In terms of assembly, (Microbial infection) Interacts with hepatitis B virus protein HBx; this interaction promotes the proteasomal degradation of HBx. As to quaternary structure, (Microbial infection) Interacts with human cytomegalovirus proteins IE1 and IE2. (Microbial infection) Interacts with Epstein Barr virus (EBV) lytic switch protein BZLF1; this interaction negatively regulates the transcriptional regulatory activity of BZLF1 by preventing the formation of the BZLF1-CBP complex. In terms of assembly, (Microbial infection) Interacts with influenza virus nucleoprotein NP. Ca(2+) serves as cofactor. It depends on Mg(2+) as a cofactor. Zn(2+) is required as a cofactor. Phosphorylation at Thr-161 by PKC/PKCD increases its phospholipid scramblase activity during both cell stimulation and apoptosis. Phosphorylated by OXSR1 in the presence of RELT. Post-translationally, palmitoylation is required for its phospholipid scramblase activity. Palmitoylation regulates its localization to the cell membrane or the nucleus; trafficking to the cell membrane is dependent upon palmitoylation whereas in the absence of palmitoylation, localizes to the nucleus. As to expression, expressed in platelets, erythrocyte membranes, lymphocytes, spleen, thymus, prostate, testis, uterus, intestine, colon, heart, placenta, lung, liver, kidney and pancreas. Not detected in brain and skeletal muscle.

Its subcellular location is the cell membrane. It localises to the nucleus. The protein resides in the cytoplasm. The protein localises to the perinuclear region. The enzyme catalyses a 1,2-diacyl-sn-glycero-3-phosphocholine(in) = a 1,2-diacyl-sn-glycero-3-phosphocholine(out). It carries out the reaction a 1,2-diacyl-sn-glycero-3-phosphoethanolamine(in) = a 1,2-diacyl-sn-glycero-3-phosphoethanolamine(out). The catalysed reaction is a 1,2-diacyl-sn-glycero-3-phospho-L-serine(in) = a 1,2-diacyl-sn-glycero-3-phospho-L-serine(out). Activated by Pb(2+) and Hg(2+) ions. Phosphorylation at Thr-161 by PKC/PKCD increases its phospholipid scramblase activity during both cell stimulation and apoptosis. Its function is as follows. Catalyzes calcium-induced ATP-independent rapid bidirectional and non-specific movement of phospholipids (lipid scrambling or lipid flip-flop) between the inner and outer leaflet of the plasma membrane resulting in collapse of the phospholipid asymmetry which leads to phosphatidylserine externalization on the cell surface. Mediates calcium-dependent phosphatidylserine externalization and apoptosis in neurons via its association with TRPC5. Also exhibits magnesium-dependent nuclease activity against double-stranded DNA and RNA but not single-stranded DNA and can enhance DNA decatenation mediated by TOP2A. Negatively regulates FcR-mediated phagocytosis in differentiated macrophages. May contribute to cytokine-regulated cell proliferation and differentiation. May play a role in the antiviral response of interferon (IFN) by amplifying and enhancing the IFN response through increased expression of select subset of potent antiviral genes. Inhibits the functions of viral transactivators, including human T-cell leukemia virus (HTLV)-1 protein Tax, human immunodeficiency virus (HIV)-1 Tat, human hepatitis B virus (HBV) HBx, Epstein-Barr virus (EBV) BZLF1 and human cytomegalovirus IE1 and IE2 proteins through direct interactions. Also mediates the inhibition of influenza virus infection by preventing nuclear import of the viral nucleoprotein/NP. Plays a crucial role as a defense factor against SARS-CoV-2 independently of its scramblase activity by directly targeting nascent viral vesicles to prevent virus-membrane fusion and the release of viral RNA into the host-cell cytosol. (Microbial infection) Acts as an attachment receptor for HCV. In Homo sapiens (Human), this protein is Phospholipid scramblase 1 (PLSCR1).